A 2528-amino-acid polypeptide reads, in one-letter code: Squalestatin tetraketide synthase clz2 (2528 aa).

A Ketosynthase family 3 (KS3) domain is found at 14-409 (TVPIAIVGMS…GANAHVILES (396 aa)). Active-site for beta-ketoacyl synthase activity residues include cysteine 187, histidine 291, and histidine 331. Positions 420 to 457 (VNGHHQKNGTTNGHKGANGTTNELNGTNGTANGHDITT) are disordered. The span at 436–452 (ANGTTNELNGTNGTANG) shows a compositional bias: low complexity. A malonyl-CoA:ACP transacylase (MAT) domain region spans residues 538–856 (GAQWFAMGRE…PYLSCLLRGQ (319 aa)). The segment at 925–1063 (HDLLGSLIPG…GRIAIELDTS (139 aa)) is N-terminal hotdog fold. The region spanning 925 to 1239 (HDLLGSLIPG…NQSVGQIALQ (315 aa)) is the PKS/mFAS DH domain. A dehydratase (DH) domain region spans residues 925 to 1239 (HDLLGSLIPG…NQSVGQIALQ (315 aa)). The active-site Proton acceptor; for dehydratase activity is histidine 957. The C-terminal hotdog fold stretch occupies residues 1083-1239 (TRSVDPSNLY…NQSVGQIALQ (157 aa)). The active-site Proton donor; for dehydratase activity is aspartate 1148. Residues 1390–1590 (LYRYYTDAIK…GLDVELRDCD (201 aa)) are methyltransferase (CMet) domain. Residues 1817–2130 (GLIDTLQFSK…AGKHMGKIVI (314 aa)) are enoyl reductase (ER) (ER) domain. The tract at residues 2153-2331 (ASYLIVGGLG…AVSIDLGMVQ (179 aa)) is ketoreductase (KR) domain. Residues 2408–2430 (RARDAKEQSNSQGGGTDSKISPG) are disordered. Positions 2441-2518 (EAIDVVGRAI…ALATTVATKS (78 aa)) constitute a Carrier domain. Serine 2478 is subject to O-(pantetheine 4'-phosphoryl)serine.

Its pathway is secondary metabolite biosynthesis. Its function is as follows. Highly reducing polyketide synthase (HR-PKS); part of the gene cluster that mediates the biosynthesis of squalestatin S1 (SQS1, also known as zaragozic acid A), a heavily oxidized fungal polyketide that offers potent cholesterol lowering activity by targeting squalene synthase (SS). SQS1 is composed of a 2,8-dioxobicyclic[3.2.1]octane-3,4,5-tricarboxyclic acid core that is connected to two lipophilic polyketide arms. These initial steps feature the priming of an unusual benzoic acid starter unit onto the highly reducing polyketide synthase clz14, followed by oxaloacetate extension and product release to generate a tricarboxylic acid containing product. The phenylalanine ammonia lyase (PAL) clz10 and the acyl-CoA ligase clz12 are involved in transforming phenylalanine into benzoyl-CoA. The citrate synthase-like protein clz17 is involved in connecting the C-alpha-carbons of the hexaketide chain and oxaloacetate to afford the tricarboxylic acid unit. The potential hydrolytic enzymes, clz11 and clz13, are in close proximity to pks2 and may participate in product release. On the other side, the tetraketide arm is synthesized by a the squalestatin tetraketide synthase clz2 and enzymatically esterified to the core in the last biosynthetic step, by the acetyltransferase clz6. The biosynthesis of the tetraketide must involve 3 rounds of chain extension. After the first and second rounds methyl-transfer occurs, and in all rounds of extension the ketoreductase and dehydratase are active. The enoyl reductase and C-MeT of clz2 are not active in the final round of extension. The acetyltransferase clz6 appears to have a broad substrate selectivity for its acyl CoA substrate, allowing the in vitro synthesis of novel squalestatins. The biosynthesis of SQS1 requires several oxidative steps likely performed by oxidoreductases clz3, clz15 and clz16. Finally, in support of the identification of the cluster as being responsible for SQS1 production, the cluster contains a gene encoding a putative squalene synthase (SS) clz20, suggesting a likely mechanism for self-resistance. This chain is Squalestatin tetraketide synthase clz2, found in Cochliobolus lunatus (Filamentous fungus).